The sequence spans 155 residues: 6,7-dimethyl-8-ribityllumazine synthase (155 aa).

Residues Phe24, 58–60 (AFE), and 82–84 (AVI) contribute to the 5-amino-6-(D-ribitylamino)uracil site. 87-88 (ST) contacts (2S)-2-hydroxy-3-oxobutyl phosphate. The active-site Proton donor is the His90. Phe115 contributes to the 5-amino-6-(D-ribitylamino)uracil binding site. Position 129 (Arg129) interacts with (2S)-2-hydroxy-3-oxobutyl phosphate.

It belongs to the DMRL synthase family.

It carries out the reaction (2S)-2-hydroxy-3-oxobutyl phosphate + 5-amino-6-(D-ribitylamino)uracil = 6,7-dimethyl-8-(1-D-ribityl)lumazine + phosphate + 2 H2O + H(+). The protein operates within cofactor biosynthesis; riboflavin biosynthesis; riboflavin from 2-hydroxy-3-oxobutyl phosphate and 5-amino-6-(D-ribitylamino)uracil: step 1/2. Its function is as follows. Catalyzes the formation of 6,7-dimethyl-8-ribityllumazine by condensation of 5-amino-6-(D-ribitylamino)uracil with 3,4-dihydroxy-2-butanone 4-phosphate. This is the penultimate step in the biosynthesis of riboflavin. This chain is 6,7-dimethyl-8-ribityllumazine synthase, found in Acetivibrio thermocellus (strain ATCC 27405 / DSM 1237 / JCM 9322 / NBRC 103400 / NCIMB 10682 / NRRL B-4536 / VPI 7372) (Clostridium thermocellum).